Consider the following 473-residue polypeptide: MMTKVLGMAPVLGPRPPQEQVGPLMVKVEEKEEKGKYLPSLEMFRQRFRQFGYHDTPGPREALSQLRVLCCEWLRPEIHTKEQILELLVLEQFLTILPQELQAWVQEHCPESAEEAVTLLEDLERELDEPGHQVSTPPNEQKPVWEKISSSGTAKESPSSMQPQPLETCHKYESWGPLYIQESGEEQEFAQDPRKVRDCRLSTQHEESADEQKGSEAEGLKGDIISVIIANKPEASLERQCVNLENEKGTKPPLQEAGSKKGRESVPTKPTPGERRYICAECGKAFSNSSNLTKHRRTHTGEKPYVCTKCGKAFSHSSNLTLHYRTHLVDRPYDCKCGKAFGQSSDLLKHQRMHTEEAPYQCKDCGKAFSGKGSLIRHYRIHTGEKPYQCNECGKSFSQHAGLSSHQRLHTGEKPYKCKECGKAFNHSSNFNKHHRIHTGEKPYWCHHCGKTFCSKSNLSKHQRVHTGEGEAP.

A Glycyl lysine isopeptide (Lys-Gly) (interchain with G-Cter in SUMO2) cross-link involves residue K27. The SCAN box domain occupies 45–127 (RQRFRQFGYH…TLLEDLEREL (83 aa)). The interval 127-167 (LDEPGHQVSTPPNEQKPVWEKISSSGTAKESPSSMQPQPLE) is disordered. Positions 148–165 (ISSSGTAKESPSSMQPQP) are enriched in polar residues. Glycyl lysine isopeptide (Lys-Gly) (interchain with G-Cter in SUMO2) cross-links involve residues K221 and K232. The disordered stretch occupies residues 244–272 (LENEKGTKPPLQEAGSKKGRESVPTKPTP). Basic and acidic residues predominate over residues 258–272 (GSKKGRESVPTKPTP). 7 C2H2-type zinc fingers span residues 277-299 (YICA…RRTH), 305-327 (YVCT…YRTH), 333-354 (YDCK…QRMH), 360-382 (YQCK…YRIH), 388-410 (YQCN…QRLH), 416-438 (YKCK…HRIH), and 444-466 (YWCH…QRVH). K349 is covalently cross-linked (Glycyl lysine isopeptide (Lys-Gly) (interchain with G-Cter in SUMO2)).

The protein belongs to the krueppel C2H2-type zinc-finger protein family.

The protein resides in the nucleus. Functionally, strong transcriptional activator. Plays an important role in spermatogenesis; essential for the progression of meiotic prophase I in spermatocytes. This chain is Zinc finger and SCAN domain-containing protein 21 (ZSCAN21), found in Pan troglodytes (Chimpanzee).